Consider the following 749-residue polypeptide: Transcription factor RFX3 (749 aa).

The segment at residues 183–258 (HLQWLLDNYE…YHYYGIRVKP (76 aa)) is a DNA-binding region (RFX-type winged-helix).

This sequence belongs to the RFX family.

The protein localises to the nucleus. Functionally, transcription factor required for ciliogenesis and islet cell differentiation during endocrine pancreas development. The protein is Transcription factor RFX3 (rfx3) of Xenopus tropicalis (Western clawed frog).